The primary structure comprises 947 residues: Probable outer membrane protein pmp19 (947 aa).

The N-terminal stretch at 1–19 (MKQMRLWGFLFLSSFCQVS) is a signal peptide. One can recognise an Autotransporter domain in the interval 672 to 947 (IPLQHLCVFG…NAHAGLSLSF (276 aa)).

The protein belongs to the PMP outer membrane protein family.

The protein localises to the secreted. It is found in the cell wall. The protein resides in the cell outer membrane. This chain is Probable outer membrane protein pmp19 (pmp19), found in Chlamydia pneumoniae (Chlamydophila pneumoniae).